Reading from the N-terminus, the 636-residue chain is Chaperone protein HtpG (636 aa).

Positions 1–344 (MTLEADKQTH…SADLSLNVSR (344 aa)) are a; substrate-binding. The tract at residues 345–561 (EILQSGPVVD…EGDLGLQMRQ (217 aa)) is b. The interval 562 to 636 (LLEASGQKVP…LNKLLLELSA (75 aa)) is c.

The protein belongs to the heat shock protein 90 family. In terms of assembly, homodimer.

The protein resides in the cytoplasm. Functionally, molecular chaperone. Has ATPase activity. This chain is Chaperone protein HtpG, found in Xylella fastidiosa (strain Temecula1 / ATCC 700964).